A 473-amino-acid chain; its full sequence is Hexaprenyl pyrophosphate synthase, mitochondrial (473 aa).

Positions 84, 87, and 186 each coordinate isopentenyl diphosphate. Residues aspartate 193 and aspartate 197 each contribute to the Mg(2+) site. Arginine 202 provides a ligand contact to an all-trans-polyprenyl diphosphate. Isopentenyl diphosphate is bound at residue arginine 203. An all-trans-polyprenyl diphosphate is bound by residues lysine 323, threonine 324, glutamine 361, and lysine 378.

It belongs to the FPP/GGPP synthase family. The cofactor is Mg(2+).

It localises to the mitochondrion inner membrane. The protein operates within cofactor biosynthesis; ubiquinone biosynthesis. Assembly of polyisoprenoid side chains. The polyprenyl synthase of coenzyme Q biosynthesis catalyzes the formation from isopentenyl diphosphate of all trans-polyprenyl pyrophosphates generally ranging in length of between 6 and 10 isoprene units depending on the species. In Saccharomyces cerevisiae (strain ATCC 204508 / S288c) (Baker's yeast), this protein is Hexaprenyl pyrophosphate synthase, mitochondrial (COQ1).